We begin with the raw amino-acid sequence, 1330 residues long: G2/mitotic-specific cyclin-B3 (1330 aa).

A disordered region spans residues 1 to 50 (MPLPLPSRSSKPETKKSRSSKIVPSGNNGQSEKRGENYQEKISSSSPRRL). Residues 20–30 (SKIVPSGNNGQ) are compositionally biased toward polar residues. Residues 54 to 62 (RSAFEDLTN) carry the D-box motif. The disordered stretch occupies residues 1002 to 1059 (VETSSRVPSTPPESRAGMSSVGKLSTTSKSSVCESSSNKPSSSWGESSQKEMTPLEDI). The segment covering 1026 to 1048 (STTSKSSVCESSSNKPSSSWGES) has biased composition (low complexity).

The protein belongs to the cyclin family. Cyclin AB subfamily. In terms of assembly, interacts with CDK2 kinase. Ubiquitinated. Ubiquitination leads to its degradation during anaphase entry, after degradation of CCNB1.

Its subcellular location is the nucleus. Its function is as follows. Cyclins are positive regulatory subunits of the cyclin-dependent kinases (CDKs), and thereby play an essential role in the control of the cell cycle, notably via their destruction during cell division. Its tissue specificity suggest that it may be required during early meiotic prophase I. In Canis lupus familiaris (Dog), this protein is G2/mitotic-specific cyclin-B3 (CCNB3).